Reading from the N-terminus, the 278-residue chain is Pantothenate synthetase (278 aa).

M31 to H38 provides a ligand contact to ATP. Catalysis depends on H38, which acts as the Proton donor. Position 62 (Q62) interacts with (R)-pantoate. A beta-alanine-binding site is contributed by Q62. G148–D151 provides a ligand contact to ATP. Position 154 (Q154) interacts with (R)-pantoate. Residues L177 and M185–R188 contribute to the ATP site.

Belongs to the pantothenate synthetase family. As to quaternary structure, homodimer.

It is found in the cytoplasm. It catalyses the reaction (R)-pantoate + beta-alanine + ATP = (R)-pantothenate + AMP + diphosphate + H(+). The protein operates within cofactor biosynthesis; (R)-pantothenate biosynthesis; (R)-pantothenate from (R)-pantoate and beta-alanine: step 1/1. Its function is as follows. Catalyzes the condensation of pantoate with beta-alanine in an ATP-dependent reaction via a pantoyl-adenylate intermediate. The polypeptide is Pantothenate synthetase (Acidiphilium cryptum (strain JF-5)).